A 1611-amino-acid polypeptide reads, in one-letter code: SH3 domain-containing protein C23A1.17 (1611 aa).

Residues 3–67 form the SH3 domain; it reads SFPTRVVALY…PKDFTEPAED (65 aa). Disordered stretches follow at residues 275–648, 662–741, 762–851, and 886–1365; these read THPA…PTSL, IDPP…PPGL, AVPR…NSLN, and TPST…FSAK. Positions 278 to 296 are enriched in polar residues; that stretch reads AASSTMATESSHQSPSADS. Residues 300–312 show a composition bias toward basic and acidic residues; sequence ELSKSQRVAKDDD. The segment covering 316-330 has biased composition (polar residues); sequence VSNTANSDEPASSSK. 2 stretches are compositionally biased toward acidic residues: residues 361–373 and 387–420; these read SEQE…DAES and SEPE…QIDP. Positions 421 to 433 are enriched in basic and acidic residues; the sequence is EEAKRIALRERMA. A compositionally biased stretch (low complexity) spans 472–494; it reads STTNDSSPPKDSSSTSTQPTEQS. A compositionally biased stretch (polar residues) spans 576–586; sequence TQETSEQQVHK. Residues 605–619 show a composition bias toward basic and acidic residues; the sequence is FDKETLASNEAHEAV. Over residues 637–648 the composition is skewed to low complexity; sequence SSSVVTPSPTSL. Composition is skewed to polar residues over residues 799–808, 886–902, and 923–940; these read SRPSTGSQLR, TPST…SNVA, and ATHQ…QLGS. 3 stretches are compositionally biased toward pro residues: residues 963–974, 1022–1053, and 1076–1241; these read PAAPPSIPPPLP, PPVP…PPVP, and IPAP…PVPA. Over residues 1242–1278 the composition is skewed to low complexity; the sequence is PSSEAPSVSTPRSSVPSPHSNASPSPTSSSMASAAPA. Residues S1258, S1261, and S1266 each carry the phosphoserine modification. Over residues 1300–1312 the composition is skewed to basic residues; it reads KSSKSGEHHHHHN. Residues 1317 to 1327 show a composition bias toward polar residues; that stretch reads DSSSTRTSLAH. Positions 1340–1350 are enriched in low complexity; it reads RSSSRASKKPS. Residues 1351-1362 are compositionally biased toward polar residues; it reads IVSTTGPFNESF. S1379 carries the phosphoserine modification. The residue at position 1380 (T1380) is a Phosphothreonine.

The protein localises to the cytoplasm. The chain is SH3 domain-containing protein C23A1.17 from Schizosaccharomyces pombe (strain 972 / ATCC 24843) (Fission yeast).